A 593-amino-acid polypeptide reads, in one-letter code: Solute carrier family 13 member 2 (593 aa).

The next 4 helical transmembrane spans lie at 11-31, 53-73, 86-106, and 121-141; these read YRMY…PILV, ALPL…MGIM, TNVL…WNLH, and PALL…WISN. The span at 164 to 184 shows a compositional bias: polar residues; sequence SNVEEGSDNPTFELQEPSPQK. A disordered region spans residues 164 to 204; sequence SNVEEGSDNPTFELQEPSPQKETSKVDEKDNGQAQPLPAVP. A compositionally biased stretch (basic and acidic residues) spans 185–194; the sequence is ETSKVDEKDN. The next 8 helical transmembrane spans lie at 221 to 241, 270 to 290, 327 to 347, 369 to 389, 451 to 471, 485 to 505, 514 to 534, and 543 to 563; these read GMSL…LTGT, FAFP…QILF, PMSF…LLWF, VMVS…MVPS, LMPL…LLVA, LLLP…LYVM, LAFM…FGGL, and GIML…SWGV.

Belongs to the SLC13A/DASS transporter (TC 2.A.47) family. NADC subfamily. In terms of tissue distribution, abundant in kidney and small intestine.

The protein resides in the apical cell membrane. The enzyme catalyses succinate(out) + 3 Na(+)(out) = succinate(in) + 3 Na(+)(in). It carries out the reaction fumarate(out) + 3 Na(+)(out) = fumarate(in) + 3 Na(+)(in). It catalyses the reaction 2-oxoglutarate(out) + 3 Na(+)(out) = 2-oxoglutarate(in) + 3 Na(+)(in). With respect to regulation, li(+) decreases succinate transport in the presence of Na(+), by competing at one of the three cation binding sites. Its function is as follows. Low-affinity sodium-dicarboxylate cotransporter, that mediates the entry of citric acid cycle intermediates, such as succinate, citrate, fumarate and alpha-ketoglutarate (2-oxoglutarate) into the small intestine and renal proximal tubule. Transports the dicarboxylate into the cell with a probable stoichiometry of 3 Na(+) for 1 divalent dicarboxylate, rendering the process electrogenic. Citrate is transported in protonated form as a divalent anion, rather than the trivalent form which is normally found in blood. Has a critical role in renal dicarboxylate transport. The polypeptide is Solute carrier family 13 member 2 (SLC13A2) (Oryctolagus cuniculus (Rabbit)).